Consider the following 2587-residue polypeptide: Protein KINKY POLLEN (2587 aa).

The first 27 residues, M1–P27, serve as a signal peptide directing secretion. N71 carries an N-linked (GlcNAc...) asparagine glycan. Residues P103 to G124 are disordered. Residues K108–K117 show a composition bias toward basic residues. N262, N281, and N485 each carry an N-linked (GlcNAc...) asparagine glycan. The disordered stretch occupies residues S270–Q290. The segment covering D276–E285 has biased composition (polar residues). The disordered stretch occupies residues G589 to T611. Positions T691–E716 form a coiled coil. Residues Q784–K814 are disordered. N-linked (GlcNAc...) asparagine glycans are attached at residues N1155, N1250, N1281, and N1486. 3 disordered regions span residues H1571–D1608, V1646–N1673, and E1729–E1797. Positions A1576 to R1590 are enriched in polar residues. Residue N1595 is glycosylated (N-linked (GlcNAc...) asparagine). Basic and acidic residues predominate over residues V1646–P1666. Residues K1746–K1760 are compositionally biased toward polar residues. N-linked (GlcNAc...) asparagine glycosylation is found at N1861, N1951, N1981, N2036, and N2278. The stretch at I2006 to N2036 forms a coiled coil. Over residues Q2274–R2287 the composition is skewed to polar residues. 3 disordered regions span residues Q2274–F2299, S2319–R2360, and K2442–D2469. 4 stretches are compositionally biased toward basic and acidic residues: residues S2289 to F2299, H2322 to T2336, S2343 to S2359, and K2442 to Q2458. N-linked (GlcNAc...) asparagine glycosylation is found at N2513 and N2544. Positions I2533–I2587 are disordered. A compositionally biased stretch (polar residues) spans F2540 to T2557. The segment covering S2569–E2579 has biased composition (low complexity).

It belongs to the SABRE family. Mostly expressed in pollen and roots, especially in tip-growing cells, but also present in seedlings, stems, leaves, buds, flowers, siliques and seeds.

It localises to the secreted. Its subcellular location is the golgi apparatus. May be involved in membrane trafficking. Required for tip growth in pollen tubes and root hairs. In Arabidopsis thaliana (Mouse-ear cress), this protein is Protein KINKY POLLEN.